We begin with the raw amino-acid sequence, 843 residues long: MPLSYQHFRKLLLLDEEAGPLEEELPRLADEGLNRRVAEDLNLGNLNVSIPWTHKVGNFTGLYSSTVPCFNPKWQTPSFPDIHLQEDIVDRCKQFVGPLTVNENRRLKLIMPARFYPNVTKYLPLDKGIKPYYPEYVVNHYFQTRHYLHTLWKAGILYKRESTRSASFCGSPYSWEQDLQHGRLVFQTSKRHGDKSFCPQSSGILPRSSVGPCIQSQLRKSRLGPQPEQGQLAGRQQGGSGSIRARVHPSPWGTVGVEPSGSGPTHNCASSSSSCLHQSAVRKAAYSLIPTSKGHSSSGHAVELHHFPPNSSRSRSQGPVLSCWWLQFRNSEPCSEYCLCHIVNLIEDWGPCTEHGEHRIRTPRTPARVTGGVFLVDKNPHNTTESRLVVDFSQFSRGNTRVSWPKFAVPNLQSLTNLLSSNLSWLSLDVSAAFYHLPLHPAAMPHLLVGSSGLSRYVARLSSNSRIINNQHRTMQNLHNSCSRNLYVSLMLLYKTYGWKLHLYSHPIILGFRKIPMGVGLSPFLLAQFTSAICSVVRRAFPHCLAFSYMDDMVLGAKSVQHLESLYAAVTNFLLSLGIHLNPHKTKRWGYSLNFMGYVIGSWGTLPQEHIVQKIKMWFRKLPVNRPIDWKVCQRIVGLLGFAAPFTQCGYPALMPLYACIQAKQAFTFSPTYKAFLTKQYLNLYPVARQRPGLCQVFADATPTGWGLAIGHQRMRGTFVSPLPIHTAELLAACFARSRSGAKLIGTDNSVVLSRKYTSFPWLLGCAANWILRGTSFVYVPSALNPADDPSRGRLGLYRPLLRLLYRPTTGRTSLYADSPSVPSHLPDRVHFASPLHVAWRPP.

A terminal protein domain (TP) region spans residues 1 to 177 (MPLSYQHFRK…FCGSPYSWEQ (177 aa)). Residues 178-346 (DLQHGRLVFQ…YCLCHIVNLI (169 aa)) are spacer. 2 disordered regions span residues 220–269 (KSRL…HNCA) and 291–316 (TSKG…RSRS). The segment at 347-690 (EDWGPCTEHG…YLNLYPVARQ (344 aa)) is polymerase/reverse transcriptase domain (RT). In terms of domain architecture, Reverse transcriptase spans 357 to 600 (EHRIRTPRTP…YSLNFMGYVI (244 aa)). Positions 429, 551, and 552 each coordinate Mg(2+).

The protein belongs to the hepadnaviridae P protein family.

The enzyme catalyses DNA(n) + a 2'-deoxyribonucleoside 5'-triphosphate = DNA(n+1) + diphosphate. It carries out the reaction Endonucleolytic cleavage to 5'-phosphomonoester.. Its activity is regulated as follows. Activated by host HSP70 and HSP40 in vitro to be able to bind the epsilon loop of the pgRNA. Because deletion of the RNase H region renders the protein partly chaperone-independent, the chaperones may be needed indirectly to relieve occlusion of the RNA-binding site by this domain. Inhibited by several reverse-transcriptase inhibitors: Lamivudine, Adefovir and Entecavir. Its function is as follows. Multifunctional enzyme that converts the viral RNA genome into dsDNA in viral cytoplasmic capsids. This enzyme displays a DNA polymerase activity that can copy either DNA or RNA templates, and a ribonuclease H (RNase H) activity that cleaves the RNA strand of RNA-DNA heteroduplexes in a partially processive 3'- to 5'-endonucleasic mode. Neo-synthesized pregenomic RNA (pgRNA) are encapsidated together with the P protein, and reverse-transcribed inside the nucleocapsid. Initiation of reverse-transcription occurs first by binding the epsilon loop on the pgRNA genome, and is initiated by protein priming, thereby the 5'-end of (-)DNA is covalently linked to P protein. Partial (+)DNA is synthesized from the (-)DNA template and generates the relaxed circular DNA (RC-DNA) genome. After budding and infection, the RC-DNA migrates in the nucleus, and is converted into a plasmid-like covalently closed circular DNA (cccDNA). The activity of P protein does not seem to be necessary for cccDNA generation, and is presumably released from (+)DNA by host nuclear DNA repair machinery. This Homo sapiens (Human) protein is Protein P.